We begin with the raw amino-acid sequence, 483 residues long: CBL-interacting serine/threonine-protein kinase 19 (483 aa).

In terms of domain architecture, Protein kinase spans 28–282 (YEMGRLLGHG…MPDIMETSWF (255 aa)). ATP is bound by residues 34–42 (LGHGTFAKV) and Lys57. The active-site Proton acceptor is Asp150. An activation loop region spans residues 168–197 (DFGLSAVSDQIRQDGLFHTFCGTPAYVAPE). The residue at position 172 (Ser172) is a Phosphoserine. Thr186 carries the phosphothreonine modification. Polar residues predominate over residues 313–322 (SVSGRSSTVS). A disordered region spans residues 313–338 (SVSGRSSTVSEPEDFESFDGRRRGGS). Residues 340–364 (PRPASLNAFDLISFSPGFDLSGLFE) form the NAF domain. The segment at 367–396 (GEGSRFVSGAPVGQIISKLEEIARIVSFTV) is PPI. Residues 459–483 (NLSSENGQRVSGSRSLPSFLLSDTD) are disordered.

This sequence belongs to the protein kinase superfamily. CAMK Ser/Thr protein kinase family. SNF1 subfamily. Requires Mn(2+) as cofactor.

The enzyme catalyses L-seryl-[protein] + ATP = O-phospho-L-seryl-[protein] + ADP + H(+). The catalysed reaction is L-threonyl-[protein] + ATP = O-phospho-L-threonyl-[protein] + ADP + H(+). In terms of biological role, CIPK serine-threonine protein kinases interact with CBL proteins. Binding of a CBL protein to the regulatory NAF domain of CIPK protein lead to the activation of the kinase in a calcium-dependent manner. The chain is CBL-interacting serine/threonine-protein kinase 19 (CIPK19) from Arabidopsis thaliana (Mouse-ear cress).